A 223-amino-acid chain; its full sequence is Fibronectin type III domain-containing protein 10 (223 aa).

A signal peptide spans 1-19 (MRAPPLLLLLAACAPPSGA). Residues 20–179 (AVDPTPPGWE…FTAEPAAMQE (160 aa)) are Extracellular-facing. In terms of domain architecture, Fibronectin type-III spans 72–168 (LASAGGSLRA…VVPPELAECV (97 aa)). N-linked (GlcNAc...) asparagine glycans are attached at residues Asn-86 and Asn-109. A helical transmembrane segment spans residues 180-200 (IVVAMTAVGGSICVMLVVICL). At 201–223 (LVAYITENLMHPTFRRPSLRRQP) the chain is on the cytoplasmic side.

The protein resides in the membrane. This chain is Fibronectin type III domain-containing protein 10 (Fndc10), found in Mus musculus (Mouse).